The following is a 214-amino-acid chain: MEPAREPPSRARPPPPLAARPAPAPAAPRPRSPAEAEARGPEGLLRRSGSGYEGSTSWKAALEDTTTRLLLGAIAVLLFAILVVMSILASKGCIKCEAPCPEDWLLYGRKCYFFSEEPRDWNTGRQYCHTHEAVLAVIQSQKELEFMFKFTRREPWIGLRRVGDEFHWVNGDPFDPDTFTIAGPGECVFVEPTRLVSTECLMTRPWVCSKMAYT.

The segment at 1–56 (MEPAREPPSRARPPPPLAARPAPAPAAPRPRSPAEAEARGPEGLLRRSGSGYEGST) is disordered. Positions 10-31 (RARPPPPLAARPAPAPAAPRPR) are enriched in pro residues. Serine 32 is modified (phosphoserine). A helical transmembrane segment spans residues 69-89 (LLLGAIAVLLFAILVVMSILA). The C-type lectin domain maps to 107-209 (YGRKCYFFSE…CLMTRPWVCS (103 aa)). Disulfide bonds link cysteine 128/cysteine 208 and cysteine 187/cysteine 200.

The protein resides in the membrane. The sequence is that of C-type lectin domain family 2 member L (CLEC2L) from Homo sapiens (Human).